The following is a 411-amino-acid chain: Mannan endo-1,4-beta-mannosidase 1 (411 aa).

A signal peptide spans 1-17; sequence MLNILPFFLFFLPFLIG. Residue asparagine 33 is glycosylated (N-linked (GlcNAc...) asparagine). Substrate contacts are provided by tryptophan 87 and asparagine 197. Glutamate 198 acts as the Proton donor in catalysis. An N-linked (GlcNAc...) asparagine glycan is attached at asparagine 202. Substrate is bound at residue tyrosine 277. Residue glutamate 319 is the Nucleophile of the active site. Tryptophan 361 serves as a coordination point for substrate. N-linked (GlcNAc...) asparagine glycosylation is found at asparagine 366 and asparagine 384.

The protein belongs to the glycosyl hydrolase 5 (cellulase A) family. In terms of tissue distribution, expressed in roots, stems and flowers.

The protein resides in the secreted. It carries out the reaction Random hydrolysis of (1-&gt;4)-beta-D-mannosidic linkages in mannans, galactomannans and glucomannans.. The protein is Mannan endo-1,4-beta-mannosidase 1 (MAN1) of Arabidopsis thaliana (Mouse-ear cress).